The chain runs to 183 residues: Ribosome rescue factor SmrB (183 aa).

In terms of domain architecture, Smr spans 98–173; sequence LDLHGLTQLQ…GDAALLVLIE (76 aa).

This sequence belongs to the SmrB family. As to quaternary structure, associates with collided ribosomes, but not with correctly translating polysomes.

Acts as a ribosome collision sensor. Detects stalled/collided disomes (pairs of ribosomes where the leading ribosome is stalled and a second ribosome has collided with it) and endonucleolytically cleaves mRNA at the 5' boundary of the stalled ribosome. Stalled/collided disomes form a new interface (primarily via the 30S subunits) that binds SmrB. Cleaved mRNA becomes available for tmRNA ligation, leading to ribosomal subunit dissociation and rescue of stalled ribosomes. This is Ribosome rescue factor SmrB from Escherichia coli (strain 55989 / EAEC).